The primary structure comprises 97 residues: MRQSANLVRKHIVVTGLVQGVGFRYFTVTQARRLGVQGWVRNCRDGSVELEAQGSSDAVQALVEQLAIGPRWSEVSHVAVHDMPIIDETARAFGVRQ.

One can recognise an Acylphosphatase-like domain in the interval 9–97 (RKHIVVTGLV…ETARAFGVRQ (89 aa)). Catalysis depends on residues arginine 24 and asparagine 42.

It belongs to the acylphosphatase family.

The catalysed reaction is an acyl phosphate + H2O = a carboxylate + phosphate + H(+). This chain is Acylphosphatase (acyP), found in Bifidobacterium longum (strain NCC 2705).